A 241-amino-acid polypeptide reads, in one-letter code: MARPDGRLPDHLRPVTLTRGWSTHPEGSVLVEFGATRVLCTASVTEGVPRWRKGSGLGWVTAEYAMLPRATNTRSDRESVKGRVGGRTHEISRLIGRSLRASIDLKALGENSVVLDCDVLQADGGTRTAAITGAYVALYDAVTWLAARRSLAGRPENVMHRSVAAVSVGVVAGEPRLDLNYDEDATAEVDLNVVCTGTGDFVEVQGTGEAGVFSRGQLDALLDLAVAGCLDLAEAQRKALS.

Phosphate-binding positions include arginine 87 and 125 to 127 (GTR).

Belongs to the RNase PH family. In terms of assembly, homohexameric ring arranged as a trimer of dimers.

The catalysed reaction is tRNA(n+1) + phosphate = tRNA(n) + a ribonucleoside 5'-diphosphate. Its function is as follows. Phosphorolytic 3'-5' exoribonuclease that plays an important role in tRNA 3'-end maturation. Removes nucleotide residues following the 3'-CCA terminus of tRNAs; can also add nucleotides to the ends of RNA molecules by using nucleoside diphosphates as substrates, but this may not be physiologically important. Probably plays a role in initiation of 16S rRNA degradation (leading to ribosome degradation) during starvation. This chain is Ribonuclease PH, found in Salinispora arenicola (strain CNS-205).